The sequence spans 289 residues: Phytoene synthase (289 aa).

The protein belongs to the phytoene/squalene synthase family. It depends on ATP as a cofactor. The cofactor is Mn(2+). Mg(2+) serves as cofactor.

The protein operates within carotenoid biosynthesis; phytoene biosynthesis. Involved in the biosynthesis of carotenoids. Catalyzes the condensation of two molecules of geranylgeranyl diphosphate (GGPP) to give prephytoene diphosphate (PPPP) and the subsequent rearrangement of the cyclopropylcarbinyl intermediate to yield phytoene. This is Phytoene synthase (crtB) from Thermus thermophilus (strain ATCC BAA-163 / DSM 7039 / HB27).